The following is a 414-amino-acid chain: Methyltransferase-like protein 2 (414 aa).

The tract at residues 56–77 (LNQHSSESNPKKRKRKQKNSSF) is disordered.

It belongs to the MT-A70-like family.

Its function is as follows. Probable methyltransferase. This chain is Methyltransferase-like protein 2, found in Arabidopsis thaliana (Mouse-ear cress).